A 191-amino-acid polypeptide reads, in one-letter code: Cytochrome c oxidase subunit 6b-1 (191 aa).

The segment covering 1–14 (MADAVNAQTPSLSE) has biased composition (polar residues). The interval 1 to 126 (MADAVNAQTP…IKLETAPADF (126 aa)) is disordered. Ala2 carries the post-translational modification N-acetylalanine. Basic and acidic residues-rich tracts occupy residues 16-37 (YHLE…KEVA) and 45-56 (EEVKTEQAKEES). The segment covering 72–98 (APESTEVASEAPAAAEDNAEETPAAAE) has biased composition (low complexity). Over residues 99 to 114 (ENNDENASEEVAEETP) the composition is skewed to acidic residues. Residues 134 to 177 (TRHCFTRYVEYHRCVAAKGDDAPECDKFAKFYRSLCPSEWVDRW) form the CHCH domain. A Cx9C motif motif is present at residues 137 to 147 (CFTRYVEYHRC). 2 disulfide bridges follow: Cys137–Cys169 and Cys147–Cys158. Positions 158–169 (CDKFAKFYRSLC) match the Cx10C motif motif.

It belongs to the cytochrome c oxidase subunit 6B (TC 3.D.4.8) family. In terms of tissue distribution, expressed in the whole plant.

It localises to the mitochondrion. Its function is as follows. This protein is one of the nuclear-coded polypeptide chains of cytochrome c oxidase, the terminal oxidase in mitochondrial electron transport. This protein may be one of the heme-binding subunits of the oxidase. This is Cytochrome c oxidase subunit 6b-1 (COX6B-1) from Arabidopsis thaliana (Mouse-ear cress).